Here is a 392-residue protein sequence, read N- to C-terminus: Probable protein phosphatase 2C 22 (392 aa).

A disordered region spans residues 1–26; that stretch reads MEETRGISDPENGSSSYGGKPPNPLS. In terms of domain architecture, PPM-type phosphatase spans 89 to 356; that stretch reads RSGAWSDIGS…DNVTAVVVCL (268 aa). Mn(2+) is bound by residues aspartate 133, glycine 134, aspartate 304, and aspartate 347.

It belongs to the PP2C family. Requires Mg(2+) as cofactor. It depends on Mn(2+) as a cofactor.

The catalysed reaction is O-phospho-L-seryl-[protein] + H2O = L-seryl-[protein] + phosphate. It catalyses the reaction O-phospho-L-threonyl-[protein] + H2O = L-threonyl-[protein] + phosphate. This Arabidopsis thaliana (Mouse-ear cress) protein is Probable protein phosphatase 2C 22.